Consider the following 495-residue polypeptide: Glycerol kinase (495 aa).

T12 serves as a coordination point for ADP. Residues T12, T13, and S14 each contribute to the ATP site. T12 contributes to the sn-glycerol 3-phosphate binding site. Residue R16 participates in ADP binding. Residues R82, E83, Y134, and D243 each coordinate sn-glycerol 3-phosphate. 5 residues coordinate glycerol: R82, E83, Y134, D243, and Q244. Positions 265 and 308 each coordinate ADP. Residues T265, G308, Q312, and G409 each contribute to the ATP site. 2 residues coordinate ADP: G409 and N413.

Belongs to the FGGY kinase family.

The catalysed reaction is glycerol + ATP = sn-glycerol 3-phosphate + ADP + H(+). It participates in polyol metabolism; glycerol degradation via glycerol kinase pathway; sn-glycerol 3-phosphate from glycerol: step 1/1. Its activity is regulated as follows. Inhibited by fructose 1,6-bisphosphate (FBP). In terms of biological role, key enzyme in the regulation of glycerol uptake and metabolism. Catalyzes the phosphorylation of glycerol to yield sn-glycerol 3-phosphate. The protein is Glycerol kinase of Ectopseudomonas mendocina (strain ymp) (Pseudomonas mendocina).